Consider the following 685-residue polypeptide: uncharacterized protein (685 aa).

4 disordered regions span residues 78–220 (AKQA…HIFD), 251–280 (TQNPVPPPPAPPLTNNQGENNIPTDNRNNE), 296–332 (DNNNNNNNNNNNLGSAMNTPMNNMNKGGPRNNVNNSE), and 459–657 (RNVK…NNKS). A coiled-coil region spans residues 86 to 139 (KKKETENVEEEGEEKEKKIDDESFPDLLESTEKMKSELSKEKDKKKKQLKDGKK). Basic and acidic residues-rich tracts occupy residues 115-127 (STEKMKSELSKEK) and 165-181 (FNDKKKYNMYDGNKKND). The segment covering 190–215 (NNQQNDMNNNNQNNQNNMNNNNNNNN) has biased composition (low complexity). A compositionally biased stretch (polar residues) spans 263-276 (LTNNQGENNIPTDN). The segment covering 297-307 (NNNNNNNNNNN) has biased composition (low complexity). Residues 308–331 (LGSAMNTPMNNMNKGGPRNNVNNS) show a composition bias toward polar residues. Low complexity-rich tracts occupy residues 460 to 474 (NVKNLGQNNNEGNTN) and 481 to 498 (NNRGQGNNNNNNNNNNFN). The segment covering 499-515 (RRNDKNDNRNFRRKDID) has biased composition (basic and acidic residues). Over residues 520–530 (WRNTANPTQEE) the composition is skewed to polar residues. Positions 531–590 (NNNNMNHNNNYNNNNNNNNNNNNNNNNNNNTNHGKNFRNFNNLNNMKNNNSSNNKMMGMN) are enriched in low complexity. The span at 591 to 602 (HMQQKGMNSSTG) shows a compositional bias: polar residues. Residues 617–656 (NNKMYKNNMGNANNNNNNNAVNTNFNNNNNNGNFHMNNNK) are compositionally biased toward low complexity.

This is an uncharacterized protein from Plasmodium falciparum (isolate 3D7).